An 86-amino-acid chain; its full sequence is Neurotoxin-like protein pMD18-NTL3 (86 aa).

The signal sequence occupies residues 1 to 21 (MKTLLLTLVVLTIACLDLGYT). 4 disulfide bridges follow: Cys-24–Cys-45, Cys-38–Cys-62, Cys-66–Cys-78, and Cys-79–Cys-84.

Belongs to the three-finger toxin family. Short-chain subfamily. Orphan group IX sub-subfamily. In terms of tissue distribution, expressed by the venom gland.

The protein resides in the secreted. The chain is Neurotoxin-like protein pMD18-NTL3 from Bungarus multicinctus (Many-banded krait).